Consider the following 880-residue polypeptide: Leucine--tRNA ligase (880 aa).

The 'HIGH' region signature appears at 46–56; the sequence is PYPSGALHMGH. A 'KMSKS' region motif is present at residues 638–642; that stretch reads KMSKS. Lysine 641 is a binding site for ATP.

The protein belongs to the class-I aminoacyl-tRNA synthetase family.

The protein localises to the cytoplasm. It carries out the reaction tRNA(Leu) + L-leucine + ATP = L-leucyl-tRNA(Leu) + AMP + diphosphate. The protein is Leucine--tRNA ligase of Xanthomonas euvesicatoria pv. vesicatoria (strain 85-10) (Xanthomonas campestris pv. vesicatoria).